Reading from the N-terminus, the 462-residue chain is tRNA(Ile)-lysidine synthase (462 aa).

31-36 is a binding site for ATP; sequence SGGRDS.

This sequence belongs to the tRNA(Ile)-lysidine synthase family.

The protein localises to the cytoplasm. It catalyses the reaction cytidine(34) in tRNA(Ile2) + L-lysine + ATP = lysidine(34) in tRNA(Ile2) + AMP + diphosphate + H(+). Functionally, ligates lysine onto the cytidine present at position 34 of the AUA codon-specific tRNA(Ile) that contains the anticodon CAU, in an ATP-dependent manner. Cytidine is converted to lysidine, thus changing the amino acid specificity of the tRNA from methionine to isoleucine. The protein is tRNA(Ile)-lysidine synthase of Ralstonia nicotianae (strain ATCC BAA-1114 / GMI1000) (Ralstonia solanacearum).